Here is a 538-residue protein sequence, read N- to C-terminus: Syncytin-2 (538 aa).

A signal peptide spans 1 to 15 (MGLLLLVLILTPSLA). Residues 16-478 (AYRHPDFPLL…GWLNWEGTWK (463 aa)) are Extracellular-facing. The CXXC signature appears at 43-46 (CWLC). Disulfide bonds link Cys-43–Cys-46, Cys-43–Cys-439, and Cys-431–Cys-438. Residues Asn-133, Asn-146, Asn-177, Asn-220, Asn-241, Asn-247, Asn-312, and Asn-332 are each glycosylated (N-linked (GlcNAc...) asparagine). The segment at 354–374 (FIPLLAGLGILAGTGTGIAGI) is fusion peptide. The short motif at 414 to 430 (LQNRRGLDMLTAAQGGI) is the CKS-17 element. A CX6CC motif is present at residues 431–439 (CLALDEKCC). N-linked (GlcNAc...) asparagine glycosylation occurs at Asn-443. A helical transmembrane segment spans residues 479-499 (WFSWVLPLTGPLVSLLLLLLF). Residues 500-538 (GPCLLNLITQFVSSRLQAIKLQTNLSAGRHPRNIQESPF) lie on the Cytoplasmic side of the membrane.

Belongs to the gamma type-C retroviral envelope protein family. HERV class-I FRD env subfamily. The surface and transmembrane proteins form a heterodimer. They are attached by non-covalent interactions or by a labile interchain disulfide bond. Interacts with MFSD2A. In terms of processing, specific enzymatic cleavages in vivo yield the mature SU and TM proteins. Post-translationally, the CXXC motif is highly conserved across a broad range of retroviral envelope proteins. It is thought to participate in the formation of a labile disulfide bond possibly with the CX6CC motif present in the transmembrane protein. Isomerization of the intersubunit disulfide bond to an SU intrachain disulfide bond is thought to occur upon receptor recognition in order to allow membrane fusion. As to expression, expressed at higher level in placenta. Expressed at lower level in adrenal, bone marrow, brain, breast, colon, kidney, lung, ovary, peripheral blood lymphocytes, prostate, skin, spleen, testis, thymus, thyroid, trachea.

The protein resides in the virion. It is found in the cell membrane. Its function is as follows. This endogenous retroviral envelope protein has retained its original fusogenic properties and participates in trophoblast fusion and the formation of a syncytium during placenta morphogenesis. The interaction with MFSD2A is apparently important for this process. Endogenous envelope proteins may have kept, lost or modified their original function during evolution but this one can still make pseudotypes with MLV, HIV-1 or SIV-1 virions and confer infectivity. Retroviral envelope proteins mediate receptor recognition and membrane fusion during early infection. The surface protein mediates receptor recognition, while the transmembrane protein anchors the envelope heterodimer to the viral membrane through one transmembrane domain. The other hydrophobic domain, called fusion peptide, mediates fusion of the viral membrane with the target cell membrane. This chain is Syncytin-2 (ERVFRD-1), found in Homo sapiens (Human).